The following is a 439-amino-acid chain: Homogentisate 1,2-dioxygenase (439 aa).

The active-site Proton acceptor is the His-293. Fe cation is bound by residues His-336 and Glu-342. Positions 351 and 372 each coordinate homogentisate. His-372 lines the Fe cation pocket.

It belongs to the homogentisate dioxygenase family. Hexamer; dimer of trimers. Requires Fe cation as cofactor.

It catalyses the reaction homogentisate + O2 = 4-maleylacetoacetate + H(+). Its pathway is amino-acid degradation; L-phenylalanine degradation; acetoacetate and fumarate from L-phenylalanine: step 4/6. Functionally, involved in the catabolism of homogentisate (2,5-dihydroxyphenylacetate or 2,5-OH-PhAc), a central intermediate in the degradation of phenylalanine and tyrosine. Catalyzes the oxidative ring cleavage of the aromatic ring of homogentisate to yield maleylacetoacetate. The protein is Homogentisate 1,2-dioxygenase of Cupriavidus pinatubonensis (strain JMP 134 / LMG 1197) (Cupriavidus necator (strain JMP 134)).